Here is a 347-residue protein sequence, read N- to C-terminus: F-box protein At2g14500 (347 aa).

The F-box domain occupies 6 to 52 (PLTLSELPHDLLRNIFNRLSFADFHRATWNSISKQTAPPKTKSPWLI).

This Arabidopsis thaliana (Mouse-ear cress) protein is F-box protein At2g14500.